Here is a 321-residue protein sequence, read N- to C-terminus: Lipoyl synthase (321 aa).

The [4Fe-4S] cluster site is built by Cys68, Cys73, Cys79, Cys94, Cys98, Cys101, and Ser308. The Radical SAM core domain occupies Phe80–Thr297.

The protein belongs to the radical SAM superfamily. Lipoyl synthase family. It depends on [4Fe-4S] cluster as a cofactor.

It localises to the cytoplasm. It carries out the reaction [[Fe-S] cluster scaffold protein carrying a second [4Fe-4S](2+) cluster] + N(6)-octanoyl-L-lysyl-[protein] + 2 oxidized [2Fe-2S]-[ferredoxin] + 2 S-adenosyl-L-methionine + 4 H(+) = [[Fe-S] cluster scaffold protein] + N(6)-[(R)-dihydrolipoyl]-L-lysyl-[protein] + 4 Fe(3+) + 2 hydrogen sulfide + 2 5'-deoxyadenosine + 2 L-methionine + 2 reduced [2Fe-2S]-[ferredoxin]. The protein operates within protein modification; protein lipoylation via endogenous pathway; protein N(6)-(lipoyl)lysine from octanoyl-[acyl-carrier-protein]: step 2/2. In terms of biological role, catalyzes the radical-mediated insertion of two sulfur atoms into the C-6 and C-8 positions of the octanoyl moiety bound to the lipoyl domains of lipoate-dependent enzymes, thereby converting the octanoylated domains into lipoylated derivatives. This chain is Lipoyl synthase, found in Salmonella paratyphi A (strain AKU_12601).